A 423-amino-acid chain; its full sequence is Acyl-coenzyme A diphosphatase FITM2 (423 aa).

The segment at 1 to 47 (MATKRRPLRPNLGGTAGSPSSSGSNMNFRPGGPDITRSEARGTRPTA) is disordered. Over 1–75 (MATKRRPLRP…KTIFFNTDLK (75 aa)) the chain is Cytoplasmic. Residues 76–96 (VALYLGSLFVISVIGDFVPFP) traverse the membrane as a helical segment. Residues 97-113 (KTYFARSDNLFNQYFVK) are Lumenal-facing. Residues 114-134 (IGWGWTLLFVVPFLVLSAYTI) traverse the membrane as a helical segment. The Cytoplasmic segment spans residues 135–146 (TCGDHKRMLRHH). Residues 147 to 167 (FPRIVIATFFWFFWTKLFNVV) traverse the membrane as a helical segment. The Lumenal portion of the chain corresponds to 168-191 (ENSYGRCTTKGYATKSSCLKAGHL). The chain crosses the membrane as a helical span at residues 192-212 (WKGFDISGHAFILIHSSLVLI). His200 is an active-site residue. The Cytoplasmic segment spans residues 213–270 (EEARPIIRWETIKEHIRNERHNRSTAENSGTNPLRTLNEEQMRSLQFLYKRLTPIIRT). The chain crosses the membrane as a helical span at residues 271–291 (LFIGMAALQLLWDIMLVGTML). At 292–299 (YYHRMIEK) the chain is on the lumenal side. His294 is a catalytic residue. A helical membrane pass occupies residues 300–320 (VISGIIAILTWYFTYRFWYPT). Residues 321–423 (PGLLPEAPGN…RDREQQTLES (103 aa)) are Cytoplasmic-facing. 2 disordered regions span residues 344–381 (FKRP…PRDQ) and 400–423 (AAAN…TLES). A compositionally biased stretch (low complexity) spans 351-367 (STGAATTSSGSNSSRTN). The segment covering 409–423 (QQKRERDREQQTLES) has biased composition (basic and acidic residues).

Belongs to the FIT family. FIT2 subfamily.

It localises to the endoplasmic reticulum membrane. It carries out the reaction an acyl-CoA + H2O = an acyl-4'-phosphopantetheine + adenosine 3',5'-bisphosphate + 2 H(+). Fatty acyl-coenzyme A (CoA) diphosphatase that hydrolyzes fatty acyl-CoA to yield acyl-4'-phosphopantetheine and adenosine 3',5'-bisphosphate. Preferentially hydrolyzes unsaturated long-chain acyl-CoA substrates in the endoplasmic reticulum (ER) lumen. This catalytic activity is required for maintaining ER structure and for lipid droplets (LDs) biogenesis, which are lipid storage organelles involved in maintaining lipid and energy homeostasis. May directly bind to diacylglycerol (DAGs) and triacylglycerol, which is also important for LD biogenesis. May support directional budding of nacent LDs from the ER into the cytosol by reducing DAG levels at sites of LD formation. Plays a role in the regulation of cell morphology and cytoskeletal organization. Required for correct morphology of nociceptive multi-dendritic sensory neurons. Required for normal mechanical amplification in hearing. The polypeptide is Acyl-coenzyme A diphosphatase FITM2 (Drosophila melanogaster (Fruit fly)).